A 382-amino-acid chain; its full sequence is Pyrimidine monooxygenase RutA (382 aa).

Residues 68–69 (IK), asparagine 134, glutamate 143, 159–160 (RY), and serine 209 contribute to the FMN site.

This sequence belongs to the NtaA/SnaA/DszA monooxygenase family. RutA subfamily.

It carries out the reaction uracil + FMNH2 + NADH + O2 = (Z)-3-ureidoacrylate + FMN + NAD(+) + H2O + H(+). The enzyme catalyses thymine + FMNH2 + NADH + O2 = (Z)-2-methylureidoacrylate + FMN + NAD(+) + H2O + H(+). Its function is as follows. Catalyzes the pyrimidine ring opening between N-3 and C-4 by an unusual flavin hydroperoxide-catalyzed mechanism, adding oxygen atoms in the process to yield ureidoacrylate peracid, that immediately reacts with FMN forming ureidoacrylate and FMN-N(5)-oxide. The FMN-N(5)-oxide reacts spontaneously with NADH to produce FMN. Requires the flavin reductase RutF to regenerate FMN in vivo. The chain is Pyrimidine monooxygenase RutA from Escherichia coli (strain SE11).